Reading from the N-terminus, the 80-residue chain is Large ribosomal subunit protein bL31 (80 aa).

It belongs to the bacterial ribosomal protein bL31 family. Type A subfamily. In terms of assembly, part of the 50S ribosomal subunit.

In terms of biological role, binds the 23S rRNA. This chain is Large ribosomal subunit protein bL31, found in Nostoc punctiforme (strain ATCC 29133 / PCC 73102).